The sequence spans 226 residues: Chalcone--flavanone isomerase 1 (226 aa).

Residues threonine 52, asparagine 117, and threonine 194 each coordinate substrate.

This sequence belongs to the chalcone isomerase family.

The enzyme catalyses a chalcone = a flavanone.. It functions in the pathway secondary metabolite biosynthesis; flavonoid biosynthesis. Functionally, catalyzes the intramolecular cyclization of bicyclic chalcones into tricyclic (S)-flavanones. Responsible for the isomerization of 4,2',4',6'-tetrahydroxychalcone (also termed chalcone) into naringenin. This Lotus japonicus (Lotus corniculatus var. japonicus) protein is Chalcone--flavanone isomerase 1 (CHI1).